Here is a 273-residue protein sequence, read N- to C-terminus: Shikimate dehydrogenase (NADP(+)) (273 aa).

Shikimate is bound by residues 14 to 16 and threonine 61; that span reads SKS. The active-site Proton acceptor is lysine 65. Aspartate 77 is a binding site for NADP(+). Residues asparagine 86 and aspartate 102 each contribute to the shikimate site. NADP(+)-binding positions include 127–131, 151–156, and methionine 215; these read GAGGA and NRTGAR. Tyrosine 217 lines the shikimate pocket. Residue glycine 239 participates in NADP(+) binding.

Belongs to the shikimate dehydrogenase family. In terms of assembly, homodimer.

The catalysed reaction is shikimate + NADP(+) = 3-dehydroshikimate + NADPH + H(+). It functions in the pathway metabolic intermediate biosynthesis; chorismate biosynthesis; chorismate from D-erythrose 4-phosphate and phosphoenolpyruvate: step 4/7. Functionally, involved in the biosynthesis of the chorismate, which leads to the biosynthesis of aromatic amino acids. Catalyzes the reversible NADPH linked reduction of 3-dehydroshikimate (DHSA) to yield shikimate (SA). This is Shikimate dehydrogenase (NADP(+)) from Thioalkalivibrio sulfidiphilus (strain HL-EbGR7).